The following is a 159-amino-acid chain: Large ribosomal subunit protein uL15 (159 aa).

Positions 1–18 (MKLNEIRDNEGSSKDRIR) are enriched in basic and acidic residues. The interval 1–37 (MKLNEIRDNEGSSKDRIRVGRGIGSGKGKTGGRGVKG) is disordered. Positions 21 to 35 (RGIGSGKGKTGGRGV) are enriched in gly residues.

Belongs to the universal ribosomal protein uL15 family. As to quaternary structure, part of the 50S ribosomal subunit.

Its function is as follows. Binds to the 23S rRNA. This Agrobacterium fabrum (strain C58 / ATCC 33970) (Agrobacterium tumefaciens (strain C58)) protein is Large ribosomal subunit protein uL15.